Here is a 470-residue protein sequence, read N- to C-terminus: uncharacterized protein (470 aa).

The region spanning 1-337 (MKFGHDFKRA…SLTAQPLFFQ (337 aa)) is the SPX domain. Residues 118–145 (ASNVPSTPSDSTQQPPTNTLPSVSASSQ) form a disordered region. Over residues 122–136 (PSTPSDSTQQPPTNT) the composition is skewed to low complexity. The RING-type zinc-finger motif lies at 374 to 413 (CAICSNVAYKPVRLGCSHVFCLHCLIILQKQKVDFCPLCR).

The protein localises to the cytoplasm. This is an uncharacterized protein from Schizosaccharomyces pombe (strain 972 / ATCC 24843) (Fission yeast).